A 1377-amino-acid polypeptide reads, in one-letter code: MAYSYTEKKRIRKSFAKRAAVLDAPFLLATQIESFASFLQAETPPESRYNQGLQAAFTSIFPISSHSGNARLEFVQYMLGEPAFDVKECQQRGLTFASPLRARVRLVIMDREAPKETIKEVKEQEVYMGEIPLMTTTGSFVINGTERVIVSQLHRSPGVFFEHDRGKTHSSGKLLFSARIIPYRGSWLDFEFDPKDYLYFRVDRRRKMPVTILLRAIGMTPEEILETFHDFDAFHLSAEGAQFELVPDRLRGEVARFDIVDPTGKVIVARDKRITAKHIRELDQAGIKMIGVPDDFVLGRIIARNVVDPETGELLARANEEITEDLLGKLRDAGVRDLVTLYVNDLDRGAYISSTLRIDETADQWAARVAIYRMMRPGEPPTEEAVEALFQGLFYAPERYDLSTVGRMKFNRRAYPEKIDDKAPGWLKRFYDKVGPHGEEGEGVLANEDILAVIGVLVELRNGRGEIDDIDHLGNRRVRSVGELAENQFRAGLVRVERAVKERLSQAESDNLMPHDLINAKPISAAIKEFFGSSQLSQFMDQTNPLSEITHKRRVSALGPGGLTRERAGFEVRDVHPTHYGRVCPIETPEGPNIGLINSLAVYARTNRHGFLETPYRKVTDGKVTDQIDFLSAIEEGQYVIAQANAEIGGDGALEGDLVSCRHKGEFMLATADQVQYMDVAPGQIVSVAASLIPFLEHDDANRALMGANMQRQAVPCLRPEKPLVGTGIERTVAVDSGTAVQAMRGGVVDYVDAQRVVVRVNDNEALAGEVGVDIYNMIKYTRSNQNTNINQRPVVRVGDLIAKGDVIADGASTDLGELALGQNMLVAFMPWNGYNFEDSILISERVVADDRFTSIHVEELTVVARDTKLGPEEITRDIASLGEAQLSRLDESGIVYIGAEVEAGDVLVGKVTPKGETQLTPEEKLLRAIFGEKASDVKDTSLRVPSGMTGTVIDVQVFTREGIERDKRAQSIIDDQLRSFKTDLADQMRIVERDAFARIQRMIVGQKANGGPKKLAKGAAITAEYLETLEFYHWFDIRMADEELAIQLEAVREGLEKTRKDFEQAFEIKKKKLTQGDELPPDVQKMVKVYLAVKRRLQPGDKMAGRHGNKGVVSKIVPVEDMPYMEDGTPVDIVLNPLGVPSRMNIGQILETHLGWAAKGLGQKIDRLLRANAAAGEVRGLLEEIYNGSGKPEDFSEFTDGDVIELATNLKKGVPFATPVFDGAKEEEIAKMLELAGLPVGGQVTLFDGRTGEAFERKVTVGYKHVLKLHHLVDDKMHARSTGPYSLVTQQPLGGKAQFGGQRFGEMEVWALEAYGAAYTLQEMLTVKSDDVTGRTKVYENIVKGEHKIDSGMPESFNVLVKEIRSLAIDIDLDRE.

This sequence belongs to the RNA polymerase beta chain family. In terms of assembly, the RNAP catalytic core consists of 2 alpha, 1 beta, 1 beta' and 1 omega subunit. When a sigma factor is associated with the core the holoenzyme is formed, which can initiate transcription.

The catalysed reaction is RNA(n) + a ribonucleoside 5'-triphosphate = RNA(n+1) + diphosphate. DNA-dependent RNA polymerase catalyzes the transcription of DNA into RNA using the four ribonucleoside triphosphates as substrates. This is DNA-directed RNA polymerase subunit beta from Azoarcus sp. (strain BH72).